A 677-amino-acid chain; its full sequence is DNA ligase (677 aa).

Residues 36–40 (DAEYD), 85–86 (SI), and Glu-122 contribute to the NAD(+) site. Lys-124 serves as the catalytic N6-AMP-lysine intermediate. The NAD(+) site is built by Arg-145, Glu-181, Lys-298, and Lys-322. Positions 416, 419, 434, and 440 each coordinate Zn(2+). The BRCT domain occupies 600–677 (LTPRPLAGKT…DEAALRALLD (78 aa)).

Belongs to the NAD-dependent DNA ligase family. LigA subfamily. Mg(2+) serves as cofactor. Mn(2+) is required as a cofactor.

It catalyses the reaction NAD(+) + (deoxyribonucleotide)n-3'-hydroxyl + 5'-phospho-(deoxyribonucleotide)m = (deoxyribonucleotide)n+m + AMP + beta-nicotinamide D-nucleotide.. DNA ligase that catalyzes the formation of phosphodiester linkages between 5'-phosphoryl and 3'-hydroxyl groups in double-stranded DNA using NAD as a coenzyme and as the energy source for the reaction. It is essential for DNA replication and repair of damaged DNA. The protein is DNA ligase of Methylibium petroleiphilum (strain ATCC BAA-1232 / LMG 22953 / PM1).